The chain runs to 1448 residues: DNA primase TraC (1448 aa).

Composition is skewed to basic and acidic residues over residues 844 to 856 (ARVQ…RDPN), 863 to 872 (SAAKEARKTA), and 882 to 898 (DAQR…RDRQ). Disordered stretches follow at residues 844 to 915 (ARVQ…INVP) and 952 to 982 (QGAA…QQAQ). Low complexity predominate over residues 964–982 (AQPAPEAQGEAQKPAQQAQ). Positions 1237–1325 (PALVISEGYA…GKAIFPIFAP (89 aa)) constitute a Toprim domain. A disordered region spans residues 1414 to 1448 (ISQVQRDEQQHQEQKHVEKKQQQIEQRPRRAARIG). Positions 1418–1441 (QRDEQQHQEQKHVEKKQQQIEQRP) are enriched in basic and acidic residues.

In terms of biological role, required for autonomous replication in E.coli. Transferred into the recipient cell during bacterial conjugation. Catalyzes the synthesis of short oligoribonucleotide primers with CpA or pCpA at their 5'-termini on a single-stranded template DNA. This is DNA primase TraC (traC) from Escherichia coli.